Consider the following 444-residue polypeptide: Tol-Pal system protein TolB (444 aa).

Positions 1-26 (MNLFRSLAPMGLALALLLPAAAPALA) are cleaved as a signal peptide. Positions 287–310 (ASGTRRQLTNSPSIETAPSYSPDG) are enriched in polar residues. Positions 287 to 311 (ASGTRRQLTNSPSIETAPSYSPDGS) are disordered.

Belongs to the TolB family. As to quaternary structure, the Tol-Pal system is composed of five core proteins: the inner membrane proteins TolA, TolQ and TolR, the periplasmic protein TolB and the outer membrane protein Pal. They form a network linking the inner and outer membranes and the peptidoglycan layer.

It is found in the periplasm. In terms of biological role, part of the Tol-Pal system, which plays a role in outer membrane invagination during cell division and is important for maintaining outer membrane integrity. The chain is Tol-Pal system protein TolB from Cereibacter sphaeroides (strain ATCC 17025 / ATH 2.4.3) (Rhodobacter sphaeroides).